The primary structure comprises 363 residues: Large ribosomal subunit protein uL4A (363 aa).

At Ser87 the chain carries Phosphoserine. The interval 280-363 (PENIISNADV…EKFLTVLHEN (84 aa)) is C-terminal-extended nuclear localization signal.

It belongs to the universal ribosomal protein uL4 family. In terms of assembly, component of the large ribosomal subunit (LSU). Mature yeast ribosomes consist of a small (40S) and a large (60S) subunit. The 40S small subunit contains 1 molecule of ribosomal RNA (18S rRNA) and at least 33 different proteins. The large 60S subunit contains 3 rRNA molecules (25S, 5.8S and 5S rRNA) and at least 46 different proteins. uL4 is associated with the polypeptide exit tunnel. uL4 interacts with its chaperone ACL4 and the nuclear import receptor KAP104.

The protein resides in the cytoplasm. It is found in the nucleus. Its function is as follows. Component of the ribosome, a large ribonucleoprotein complex responsible for the synthesis of proteins in the cell. The small ribosomal subunit (SSU) binds messenger RNAs (mRNAs) and translates the encoded message by selecting cognate aminoacyl-transfer RNA (tRNA) molecules. The large subunit (LSU) contains the ribosomal catalytic site termed the peptidyl transferase center (PTC), which catalyzes the formation of peptide bonds, thereby polymerizing the amino acids delivered by tRNAs into a polypeptide chain. The nascent polypeptides leave the ribosome through a tunnel in the LSU and interact with protein factors that function in enzymatic processing, targeting, and the membrane insertion of nascent chains at the exit of the ribosomal tunnel. uL4 participates in the regulation of the accumulation of its own mRNA. The chain is Large ribosomal subunit protein uL4A (rpl402) from Schizosaccharomyces pombe (strain 972 / ATCC 24843) (Fission yeast).